The chain runs to 65 residues: Large ribosomal subunit protein bL35 (65 aa).

This sequence belongs to the bacterial ribosomal protein bL35 family.

The protein is Large ribosomal subunit protein bL35 of Porphyromonas gingivalis (strain ATCC 33277 / DSM 20709 / CIP 103683 / JCM 12257 / NCTC 11834 / 2561).